The primary structure comprises 312 residues: Acetylglutamate kinase (312 aa).

Substrate contacts are provided by residues 77 to 78 (GG), arginine 99, and asparagine 192.

The protein belongs to the acetylglutamate kinase family. ArgB subfamily.

It localises to the cytoplasm. The catalysed reaction is N-acetyl-L-glutamate + ATP = N-acetyl-L-glutamyl 5-phosphate + ADP. It functions in the pathway amino-acid biosynthesis; L-arginine biosynthesis; N(2)-acetyl-L-ornithine from L-glutamate: step 2/4. Catalyzes the ATP-dependent phosphorylation of N-acetyl-L-glutamate. In Synechococcus sp. (strain JA-2-3B'a(2-13)) (Cyanobacteria bacterium Yellowstone B-Prime), this protein is Acetylglutamate kinase.